The following is a 322-amino-acid chain: Short chain dehydrogenase AOL_s00215g274 (322 aa).

Residues 47 to 48 (AV), 104 to 106 (IAV), 197 to 201 (YNVSK), and 230 to 232 (VAT) each bind NAD(+). Tyr-197 acts as the Proton acceptor in catalysis.

This sequence belongs to the short-chain dehydrogenases/reductases (SDR) family.

It participates in secondary metabolite biosynthesis; terpenoid biosynthesis. Its function is as follows. Short chain dehydrogenase; part of the gene cluster that mediates the biosynthesis of sesquiterpenyl epoxy-cyclohexenoids (SECs) such as anthrobotrisins and arthrosporols, metabolites that possess a novel hybrid carbon skeleton consisting of a polyketide-derived epoxycyclohexenol combined with a terpenoid-derived monocyclic sesquiterpenol substructure (PKS-PTS hybrid). The SEC pathway plays an important role for fungal soil colonization via decreasing fungal nematode-capturing ability. Within the pathway, the cytochrome P450 monooxygenase AOL_s00215g274 is involved in specific regional ketone reductions at C-4 of farnesyl epoxy-quinone. The pathway begins with the biosynthesis of 6-methylsalicylic acid (6-MSA), the first precursor of the polyketide-derived epoxycyclohexenol in arthrosporols, by the polyketide synthase (PKS) AOL_s00215g283 via condensation of 1 acetate and 3 malonate units. The 6-methylsalicylic acid decarboxylase AOL_s00215g281 then catalyzes the decarboxylation of 6-methylsalicylic acid to yield m-cresol. The cytochrome P450 monooxygenase AOL_s00215g282 further oxidizes m-cresol to yield toluquinol. With the assistance of the oxidoreductase AOL_s00215g277, the polyprenyl transferase AOL_s00215g276 catalyzes the farnesylation of toluquinol to produce farnesyl hydroquinone, the hybrid precursor for biosynthesis of SECs. Farnesyl hydroquinone undergoes epoxidation and then subsequent dehydrogenation to form farnesyl epoxy-quinone, the first and simplest SEC. The cytochrome P450 monooxygenase AOL_s00215g278 and the FAD-dependent monooxygenase AOL_s00215g279 might be involved in the oxygenation of the phenol moiety, most likely in the epoxy formation. The cytochrome P450 monooxygenases AOL_s00215g274 and AOL_s00215g280 are involved in specific regional ketone reductions at respectively C-4 and C-1 of farnesyl epoxy-quinone PubMed:33823587. The protein is Short chain dehydrogenase AOL_s00215g274 of Arthrobotrys oligospora (strain ATCC 24927 / CBS 115.81 / DSM 1491) (Nematode-trapping fungus).